Reading from the N-terminus, the 271-residue chain is Mitochondrial distribution and morphology protein 12 (271 aa).

The SMP-LTD domain maps to 1-267 (MSFDINWSTL…WPSWINLDFN (267 aa)). Lys49 is covalently cross-linked (Glycyl lysine isopeptide (Lys-Gly) (interchain with G-Cter in ubiquitin)).

Belongs to the MDM12 family. Component of the ER-mitochondria encounter structure (ERMES) or MDM complex, composed of MMM1, MDM10, MDM12 and MDM34. An MMM1 homodimer associates with one molecule of MDM12 on each side in a pairwise head-to-tail manner, and the SMP-LTD domains of MMM1 and MDM12 generate a continuous hydrophobic tunnel for phospholipid trafficking. Interacts with PUF3.

The protein localises to the mitochondrion outer membrane. Its subcellular location is the endoplasmic reticulum membrane. In terms of biological role, component of the ERMES/MDM complex, which serves as a molecular tether to connect the endoplasmic reticulum (ER) and mitochondria. Components of this complex are involved in the control of mitochondrial shape and protein biogenesis, and function in nonvesicular lipid trafficking between the ER and mitochondria. MDM12 is required for the interaction of the ER-resident membrane protein MMM1 and the outer mitochondrial membrane-resident beta-barrel protein MDM10. The MDM12-MMM1 subcomplex functions in the major beta-barrel assembly pathway that is responsible for biogenesis of all mitochondrial outer membrane beta-barrel proteins, and acts in a late step after the SAM complex. The MDM10-MDM12-MMM1 subcomplex further acts in the TOM40-specific pathway after the action of the MDM12-MMM1 complex. Essential for establishing and maintaining the structure of mitochondria and maintenance of mtDNA nucleoids. The polypeptide is Mitochondrial distribution and morphology protein 12 (Saccharomyces cerevisiae (strain AWRI1631) (Baker's yeast)).